The following is a 90-amino-acid chain: Co-chaperonin GroES (90 aa).

It belongs to the GroES chaperonin family. As to quaternary structure, heptamer of 7 subunits arranged in a ring. Interacts with the chaperonin GroEL.

The protein resides in the cytoplasm. Together with the chaperonin GroEL, plays an essential role in assisting protein folding. The GroEL-GroES system forms a nano-cage that allows encapsulation of the non-native substrate proteins and provides a physical environment optimized to promote and accelerate protein folding. GroES binds to the apical surface of the GroEL ring, thereby capping the opening of the GroEL channel. In Thermosipho africanus (strain TCF52B), this protein is Co-chaperonin GroES.